The chain runs to 256 residues: Large ribosomal subunit protein eL8y (256 aa).

Over residues 1 to 15 (MAPKKGVKVASKKKP) the composition is skewed to basic residues. The tract at residues 1-20 (MAPKKGVKVASKKKPEKVTN) is disordered.

This sequence belongs to the eukaryotic ribosomal protein eL8 family.

This is Large ribosomal subunit protein eL8y (RPL7AB) from Arabidopsis thaliana (Mouse-ear cress).